The sequence spans 835 residues: Leucine--tRNA ligase (835 aa).

The 'HIGH' region signature appears at 36-46 (PYPSGKIHVGH). Residues 602-606 (KMSKS) carry the 'KMSKS' region motif. Residue Lys605 participates in ATP binding.

It belongs to the class-I aminoacyl-tRNA synthetase family.

It localises to the cytoplasm. It carries out the reaction tRNA(Leu) + L-leucine + ATP = L-leucyl-tRNA(Leu) + AMP + diphosphate. The chain is Leucine--tRNA ligase from Rickettsia conorii (strain ATCC VR-613 / Malish 7).